A 132-amino-acid chain; its full sequence is Large ribosomal subunit protein bL12 (132 aa).

Belongs to the bacterial ribosomal protein bL12 family. Homodimer. Part of the ribosomal stalk of the 50S ribosomal subunit. Forms a multimeric L10(L12)X complex, where L10 forms an elongated spine to which 2 to 4 L12 dimers bind in a sequential fashion. Binds GTP-bound translation factors.

Forms part of the ribosomal stalk which helps the ribosome interact with GTP-bound translation factors. Is thus essential for accurate translation. This chain is Large ribosomal subunit protein bL12, found in Chloroflexus aggregans (strain MD-66 / DSM 9485).